The following is a 246-amino-acid chain: ATP synthase subunit b 1 (246 aa).

The chain crosses the membrane as a helical span at residues 5 to 27 (WFTFTAQVINFLVLVGLLRYFLY).

Belongs to the ATPase B chain family. F-type ATPases have 2 components, F(1) - the catalytic core - and F(0) - the membrane proton channel. F(1) has five subunits: alpha(3), beta(3), gamma(1), delta(1), epsilon(1). F(0) has three main subunits: a(1), b(2) and c(10-14). The alpha and beta chains form an alternating ring which encloses part of the gamma chain. F(1) is attached to F(0) by a central stalk formed by the gamma and epsilon chains, while a peripheral stalk is formed by the delta and b chains.

The protein resides in the cell inner membrane. Its function is as follows. F(1)F(0) ATP synthase produces ATP from ADP in the presence of a proton or sodium gradient. F-type ATPases consist of two structural domains, F(1) containing the extramembraneous catalytic core and F(0) containing the membrane proton channel, linked together by a central stalk and a peripheral stalk. During catalysis, ATP synthesis in the catalytic domain of F(1) is coupled via a rotary mechanism of the central stalk subunits to proton translocation. Component of the F(0) channel, it forms part of the peripheral stalk, linking F(1) to F(0). In Rhodopirellula baltica (strain DSM 10527 / NCIMB 13988 / SH1), this protein is ATP synthase subunit b 1.